A 325-amino-acid polypeptide reads, in one-letter code: Eukaryotic translation initiation factor 3 subunit I (325 aa).

WD repeat units lie at residues 8 to 47, 50 to 89, 144 to 183, 186 to 225, and 283 to 324; these read GHER…RLGT, GHTG…QLAL, CSDS…QLSN, EHTK…HLKT, and GHFG…FEFE.

Belongs to the eIF-3 subunit I family. In terms of assembly, component of the eukaryotic translation initiation factor 3 (eIF-3) complex, which is composed of 13 subunits: EIF3A, EIF3B, EIF3C, EIF3D, EIF3E, EIF3F, EIF3G, EIF3H, EIF3I, EIF3J, EIF3K, EIF3L and EIF3M.

The protein resides in the cytoplasm. Component of the eukaryotic translation initiation factor 3 (eIF-3) complex, which is involved in protein synthesis of a specialized repertoire of mRNAs and, together with other initiation factors, stimulates binding of mRNA and methionyl-tRNAi to the 40S ribosome. The eIF-3 complex specifically targets and initiates translation of a subset of mRNAs involved in cell proliferation. The sequence is that of Eukaryotic translation initiation factor 3 subunit I from Taeniopygia guttata (Zebra finch).